A 163-amino-acid polypeptide reads, in one-letter code: Large ribosomal subunit protein uL10 (163 aa).

It belongs to the universal ribosomal protein uL10 family. Part of the ribosomal stalk of the 50S ribosomal subunit. The N-terminus interacts with L11 and the large rRNA to form the base of the stalk. The C-terminus forms an elongated spine to which L12 dimers bind in a sequential fashion forming a multimeric L10(L12)X complex.

Functionally, forms part of the ribosomal stalk, playing a central role in the interaction of the ribosome with GTP-bound translation factors. This is Large ribosomal subunit protein uL10 from Histophilus somni (strain 2336) (Haemophilus somnus).